The following is a 216-amino-acid chain: Guanylate kinase (216 aa).

The 179-residue stretch at 15–193 folds into the Guanylate kinase-like domain; sequence GNLFMVVAPS…ALKQLQNVVH (179 aa). Position 22-29 (22-29) interacts with ATP; sequence APSGAGKS.

This sequence belongs to the guanylate kinase family.

It localises to the cytoplasm. The catalysed reaction is GMP + ATP = GDP + ADP. Essential for recycling GMP and indirectly, cGMP. This chain is Guanylate kinase, found in Cupriavidus metallidurans (strain ATCC 43123 / DSM 2839 / NBRC 102507 / CH34) (Ralstonia metallidurans).